The chain runs to 217 residues: Serine acetyltransferase (217 aa).

This sequence belongs to the transferase hexapeptide repeat family.

It localises to the cytoplasm. The enzyme catalyses L-serine + acetyl-CoA = O-acetyl-L-serine + CoA. It functions in the pathway amino-acid biosynthesis; L-cysteine biosynthesis; L-cysteine from L-serine: step 1/2. With respect to regulation, inhibited by cysteine. Its function is as follows. Catalyzes the acetylation of serine by acetyl-CoA to produce O-acetylserine (OAS). This chain is Serine acetyltransferase, found in Bacillus pumilus (strain SAFR-032).